The following is an 810-amino-acid chain: Phospholipase D alpha 1 (810 aa).

The C2 domain occupies 1-126 (MAQHLLHGTL…INGEEVDQWV (126 aa)). Asp187 contacts Ca(2+). The region spanning 327–366 (TMFTHHQKIVVVDSEMPSRGGSEMRRIVSFVGGIDLCDGR) is the PLD phosphodiesterase 1 domain. Catalysis depends on residues His332, Lys334, and Asp339. An a 1,2-diacyl-sn-glycero-3-phosphate-binding site is contributed by His332. Residues His372 and His406 each coordinate Ca(2+). 2 residues coordinate a 1,2-diacyl-sn-glycero-3-phosphate: Gln522 and His661. The PLD phosphodiesterase 2 domain maps to 656-683 (FMIYVHTKMMIVDDEYIIIGSANINQRS). Residues His661, Lys663, and Asp668 contribute to the active site. Ca(2+) is bound at residue Glu722.

It belongs to the phospholipase D family. C2-PLD subfamily. Interacts with GPA1. This binding inhibits PLDALPHA1 activity and is relieved by GTP. Ca(2+) is required as a cofactor. In terms of tissue distribution, highly expressed in roots, stems and flowers, moderately in leaves, seedlings and siliques. Not detected in seeds.

Its subcellular location is the cytoplasm. The protein resides in the cell membrane. It localises to the mitochondrion membrane. The protein localises to the microsome membrane. It is found in the vacuole. Its subcellular location is the cytoplasmic vesicle. The protein resides in the clathrin-coated vesicle. It carries out the reaction a 1,2-diacyl-sn-glycero-3-phosphocholine + H2O = a 1,2-diacyl-sn-glycero-3-phosphate + choline + H(+). Not inhibited by neomycin. Hydrolyzes glycerol-phospholipids at the terminal phosphodiesteric bond to generate phosphatidic acids (PA). Plays an important role in various cellular processes, including phytohormone action and response to stress, characterized by acidification of the cell. Involved in wound induction of jasmonic acid. May be involved in membrane lipid remodeling. Probably involved in freezing tolerance by modulating the cold-responsive genes and accumulation of osmolytes. Can use phosphatidylcholine (PC), phosphatidylethanolamine (PE) and phosphatidylglycerol (PG) as substrates, both in presence or in absence of PIP2. Its main substrate is phosphatidylcholine. Stimulates the intrinsic GTPase activity of GPA1 upon binding. Mediates the abscisic acid effects on stomata through interaction with GPA1 and the production of phosphatidic acid that bind to ABI1. Involved in seed aging and deterioration. Involved in microtubule stabilization and salt tolerance. Involved in abscisic acid-induced stomatal closure. In Arabidopsis thaliana (Mouse-ear cress), this protein is Phospholipase D alpha 1.